The sequence spans 736 residues: Catalase-1 (736 aa).

A disordered region spans residues 1 to 29 (MSNIISQAGQKAKEALTSAPSSKKVDDLK). Arginine 89 provides a ligand contact to heme. The active site involves histidine 92. A heme-binding site is contributed by arginine 129. Residue asparagine 165 is part of the active site. Heme contacts are provided by phenylalanine 178, arginine 375, tyrosine 379, and arginine 386. Positions 356–379 (CTSHVVNGIGFSDDPLLQGRNFSY) form a cross-link, 3-(S-cysteinyl)-tyrosine (Cys-Tyr).

This sequence belongs to the catalase family. Homotetramer. Requires heme as cofactor. Glycosylated; with alpha-glucose and/or alpha-mannose.

Its subcellular location is the secreted. It localises to the cell wall. It catalyses the reaction 2 H2O2 = O2 + 2 H2O. Occurs in almost all aerobically respiring organisms and serves to protect cells from the toxic effects of hydrogen peroxide. In Neurospora crassa (strain ATCC 24698 / 74-OR23-1A / CBS 708.71 / DSM 1257 / FGSC 987), this protein is Catalase-1 (cat-1).